An 85-amino-acid polypeptide reads, in one-letter code: Small ribosomal subunit protein bS18 (85 aa).

The protein belongs to the bacterial ribosomal protein bS18 family. As to quaternary structure, part of the 30S ribosomal subunit. Forms a tight heterodimer with protein bS6.

Its function is as follows. Binds as a heterodimer with protein bS6 to the central domain of the 16S rRNA, where it helps stabilize the platform of the 30S subunit. The chain is Small ribosomal subunit protein bS18 from Helicobacter pylori (strain P12).